The primary structure comprises 134 residues: Complexin-1 (134 aa).

Disordered stretches follow at residues 1 to 60 (MEFV…AERE) and 74 to 114 (KKEE…EEDE). A compositionally biased stretch (basic and acidic residues) spans 15-60 (DMGKMLGGDEEKDPDAAKKEEERQEALRQAEEERKAKYAKMEAERE). Positions 29–64 (DAAKKEEERQEALRQAEEERKAKYAKMEAEREVMRQ) form a coiled coil. The interval 48-70 (RKAKYAKMEAEREVMRQGIRDKY) is interaction with the SNARE complex.

It belongs to the complexin/synaphin family. In terms of assembly, binds to the SNARE core complex containing SNAP25, VAMP2 and STX1A. As to expression, nervous system, and pancreatic islet cells. Present in many brain regions, including hippocampus and cerebellum. In the retina, present at conventional amacrine cell synapses (at protein level).

The protein resides in the cytoplasm. It localises to the cytosol. It is found in the perikaryon. The protein localises to the presynapse. Positively regulates a late step in exocytosis of various cytoplasmic vesicles, such as synaptic vesicles and other secretory vesicles. Organizes the SNAREs into a cross-linked zigzag topology that, when interposed between the vesicle and plasma membranes, is incompatible with fusion, thereby preventing SNAREs from releasing neurotransmitters until an action potential arrives at the synapse. Also involved in glucose-induced secretion of insulin by pancreatic beta-cells. Essential for motor behavior. This Mus musculus (Mouse) protein is Complexin-1 (Cplx1).